A 253-amino-acid chain; its full sequence is ATP synthase subunit b 1 (253 aa).

A helical transmembrane segment spans residues Leu2–Leu22.

Belongs to the ATPase B chain family. In terms of assembly, F-type ATPases have 2 components, F(1) - the catalytic core - and F(0) - the membrane proton channel. F(1) has five subunits: alpha(3), beta(3), gamma(1), delta(1), epsilon(1). F(0) has four main subunits: a(1), b(2) and c(10-14). The alpha and beta chains form an alternating ring which encloses part of the gamma chain. F(1) is attached to F(0) by a central stalk formed by the gamma and epsilon chains, while a peripheral stalk is formed by the delta and b chains.

It is found in the cell inner membrane. In terms of biological role, f(1)F(0) ATP synthase produces ATP from ADP in the presence of a proton or sodium gradient. F-type ATPases consist of two structural domains, F(1) containing the extramembraneous catalytic core and F(0) containing the membrane proton channel, linked together by a central stalk and a peripheral stalk. During catalysis, ATP synthesis in the catalytic domain of F(1) is coupled via a rotary mechanism of the central stalk subunits to proton translocation. Functionally, component of the F(0) channel, it forms part of the peripheral stalk, linking F(1) to F(0). This Prosthecochloris aestuarii (strain DSM 271 / SK 413) protein is ATP synthase subunit b 1.